The sequence spans 604 residues: Glucose-methanol-choline family oxidoreductase mfmG (604 aa).

The first 24 residues, 1–24, serve as a signal peptide directing secretion; it reads MYMLRPSSLLLATGLLNQGSSVLA. N32 is a glycosylation site (N-linked (GlcNAc...) asparagine). FAD is bound by residues 44-45 and 65-66; these read TA and EA. Residues N76 and N97 are each glycosylated (N-linked (GlcNAc...) asparagine). 126 to 129 contacts FAD; it reads NFMA. N-linked (GlcNAc...) asparagine glycans are attached at residues N260, N265, N401, and N460. Residue H538 is the Proton acceptor of the active site. Residues A572 and 584-585 each bind FAD; that span reads PQ.

Belongs to the GMC oxidoreductase family. As to quaternary structure, homodimer. FAD is required as a cofactor.

Oxidoreductase; part of the gene cluster that mediates the biosynthesis of the phthalide-terpenoid hybrid 11'-O-desmethylfendlerol. MfmG seems not to be involved directly in the biosynthesis of 11'-O-desmethylfendlerol and its role has still to be determined. The biosynthesis of 11'-O-desmethylfendlerol begins with the NR-PKS mfmB that forms 3,5-dimethylorsellinic acid (DMOA), which is then transformed into the phthalide 5,7-dihydroxy-4-(hydroxymethyl)-6-methylphthalide by the cytochrome P450 monooxygenase mfmA and the hydrolase mfmC. Subsequently, the methyltransferase mfmE catalyzes 7-O-methylation to yield 5-hydroxy-4-(hydroxymethyl)-7-methoxy-6-methylphthalide, which undergoes C-3 hydroxylation by the cytochrome P450 monooxygenase mfmF. The resultant cyclopolic acid (2,5-dihydroxy-4-(hydroxymethyl)-7-methoxy-6-methylphthalide) is then farnesylated by the DMATS-type prenyltransferase mfmD to afford 5-O-farnesylcyclopolic acid. Finally, the Pyr4-family terpene cyclase mfmH cyclizes the farnesyl moiety of 5-O-farnesylcyclopolic acid into a drimane-like structure, thus completing the biosynthesis of 11'-O-desmethylfendlerol. The sequence is that of Glucose-methanol-choline family oxidoreductase mfmG from Annulohypoxylon moriforme (Filamentous fungus).